We begin with the raw amino-acid sequence, 103 residues long: Large ribosomal subunit protein bL21 (103 aa).

Belongs to the bacterial ribosomal protein bL21 family. Part of the 50S ribosomal subunit. Contacts protein L20.

Its function is as follows. This protein binds to 23S rRNA in the presence of protein L20. In Maridesulfovibrio salexigens (strain ATCC 14822 / DSM 2638 / NCIMB 8403 / VKM B-1763) (Desulfovibrio salexigens), this protein is Large ribosomal subunit protein bL21.